We begin with the raw amino-acid sequence, 156 residues long: Small ribosomal subunit protein uS7 (156 aa).

This sequence belongs to the universal ribosomal protein uS7 family. In terms of assembly, part of the 30S ribosomal subunit. Contacts proteins S9 and S11.

Functionally, one of the primary rRNA binding proteins, it binds directly to 16S rRNA where it nucleates assembly of the head domain of the 30S subunit. Is located at the subunit interface close to the decoding center, probably blocks exit of the E-site tRNA. This chain is Small ribosomal subunit protein uS7, found in Bifidobacterium longum (strain NCC 2705).